The chain runs to 489 residues: Acetyl-coenzyme A carboxylase carboxyl transferase subunit beta, chloroplastic (489 aa).

In terms of domain architecture, CoA carboxyltransferase N-terminal spans 225 to 489 (LWIQCDNCYG…FFPLNKTEIK (265 aa)). Residues Cys229, Cys232, Cys245, and Cys248 each contribute to the Zn(2+) site. The segment at 229 to 248 (CDNCYGLMYKKVEMNVCEEC) adopts a C4-type zinc-finger fold.

It belongs to the AccD/PCCB family. In terms of assembly, acetyl-CoA carboxylase is a heterohexamer composed of biotin carboxyl carrier protein, biotin carboxylase and 2 subunits each of ACCase subunit alpha and ACCase plastid-coded subunit beta (accD). The cofactor is Zn(2+).

The protein localises to the plastid. It is found in the chloroplast stroma. It carries out the reaction N(6)-carboxybiotinyl-L-lysyl-[protein] + acetyl-CoA = N(6)-biotinyl-L-lysyl-[protein] + malonyl-CoA. The protein operates within lipid metabolism; malonyl-CoA biosynthesis; malonyl-CoA from acetyl-CoA: step 1/1. Functionally, component of the acetyl coenzyme A carboxylase (ACC) complex. Biotin carboxylase (BC) catalyzes the carboxylation of biotin on its carrier protein (BCCP) and then the CO(2) group is transferred by the transcarboxylase to acetyl-CoA to form malonyl-CoA. The chain is Acetyl-coenzyme A carboxylase carboxyl transferase subunit beta, chloroplastic from Draba nemorosa (Woodland whitlowgrass).